A 71-amino-acid polypeptide reads, in one-letter code: Disintegrin horridistatin-2 (71 aa).

The Disintegrin domain occupies 1–71; sequence GEECDCGSPA…ADCPRNGLYG (71 aa). 6 cysteine pairs are disulfide-bonded: C4–C19, C6–C14, C13–C36, C27–C33, C32–C57, and C45–C64. The short motif at 49 to 51 is the Cell attachment site element; it reads RGD.

It belongs to the venom metalloproteinase (M12B) family. P-II subfamily. P-IIa sub-subfamily. In terms of assembly, monomer (disintegrin). Expressed by the venom gland.

Its subcellular location is the secreted. Its function is as follows. Inhibits ADP-induced platelet aggregation (IC(50) is 16.2 nM) by binding to alpha-IIb/beta-3 (ITGA2B/ITGB3). This chain is Disintegrin horridistatin-2, found in Crotalus horridus (Timber rattlesnake).